We begin with the raw amino-acid sequence, 509 residues long: Lysine--tRNA ligase (509 aa).

Residues E418 and E425 each contribute to the Mg(2+) site.

This sequence belongs to the class-II aminoacyl-tRNA synthetase family. In terms of assembly, homodimer. The cofactor is Mg(2+).

The protein localises to the cytoplasm. It carries out the reaction tRNA(Lys) + L-lysine + ATP = L-lysyl-tRNA(Lys) + AMP + diphosphate. This is Lysine--tRNA ligase from Acinetobacter baumannii (strain AB307-0294).